Here is a 481-residue protein sequence, read N- to C-terminus: Putative amino-acid transporter CPE0389 (481 aa).

The next 13 helical transmembrane spans lie at 7–27, 36–56, 87–107, 127–147, 156–176, 208–228, 241–261, 289–309, 338–358, 364–384, 401–421, 422–442, and 461–481; these read LGVI…GVYN, ASAG…WFIA, FLMA…YAVL, LSIA…LAGV, IGTI…LFSF, STML…VVSG, FLGF…PLGV, VIMN…WTVM, FSLL…HFAG, MLSI…LYLF, RKYA…LIYA, AGIN…PVFI, and YFAI…FKFM.

It belongs to the amino acid-polyamine-organocation (APC) superfamily. Basic amino acid/polyamine antiporter (APA) (TC 2.A.3.2) family.

The protein localises to the cell membrane. Its function is as follows. Could be an amino acid transporter. The sequence is that of Putative amino-acid transporter CPE0389 from Clostridium perfringens (strain 13 / Type A).